A 150-amino-acid polypeptide reads, in one-letter code: Snaclec rhinocetin subunit beta (150 aa).

An N-terminal signal peptide occupies residues 1–23 (MGRFIFLSSGLLVVFLSLSGTGA). Cystine bridges form between Cys27–Cys38, Cys55–Cys144, and Cys121–Cys136. The C-type lectin domain occupies 34 to 145 (YEGYCYKVFK…CNRQQYFVCK (112 aa)).

It belongs to the snaclec family. Heterodimer; disulfide-linked. In terms of tissue distribution, expressed by the venom gland.

The protein localises to the secreted. Its function is as follows. Antagonist of the alpha-2 subunit of the integrin alpha-2/beta-1 (ITGA2/ITGB1) on human platelets and endothelial cells. This protein inhibits collagen-stimulated activation of human platelets in a dose-dependent manner. In addition, it antagonizes the binding of monoclonal antibodies against the alpha-2 subunit of integrin alpha-2/beta-1 to platelets and it coimmunoprecipitates with this integrin. This is Snaclec rhinocetin subunit beta from Bitis rhinoceros (West African gaboon viper).